Consider the following 505-residue polypeptide: Structural protein 27 (505 aa).

Hydrophobic stretches follow at residues 20–40 (VSLICFLLVFSVTVPFVFSPV), 423–443 (MKGIGSDIQWLLFTVIIMSTI), and 470–490 (IGLGLLLSMVFFGIFIGLILV).

It localises to the virion. This is Structural protein 27 from His1 virus (isolate Australia/Victoria) (His1V).